The following is a 146-amino-acid chain: Large ribosomal subunit protein uL15 (146 aa).

Residues 1–13 (MKLHELKPAEGSR) show a composition bias toward basic and acidic residues. Positions 1–52 (MKLHELKPAEGSRKVRNRVGRGIGSGNGKTAGKGHKGQNARSGGGVRLGFEG) are disordered. Gly residues-rich tracts occupy residues 21–31 (RGIGSGNGKTA) and 42–52 (SGGGVRLGFEG).

It belongs to the universal ribosomal protein uL15 family. In terms of assembly, part of the 50S ribosomal subunit.

Its function is as follows. Binds to the 23S rRNA. The protein is Large ribosomal subunit protein uL15 of Bacillus cereus (strain B4264).